The primary structure comprises 164 residues: FMN reductase (NADH) RutF (164 aa).

It belongs to the non-flavoprotein flavin reductase family. RutF subfamily.

It catalyses the reaction FMNH2 + NAD(+) = FMN + NADH + 2 H(+). Functionally, catalyzes the reduction of FMN to FMNH2 which is used to reduce pyrimidine by RutA via the Rut pathway. The sequence is that of FMN reductase (NADH) RutF from Escherichia coli O150:H5 (strain SE15).